A 160-amino-acid polypeptide reads, in one-letter code: E3 ubiquitin ligase complex SCF subunit sconC (160 aa).

Residues 101 to 160 form an interaction with the F-box domain of F-box proteins region; that stretch reads ILAANYLDIKALLDVGCKTVANMIKGKSPEEIRKTFNIQNDFTPEEEDQIRRENEWAEDR.

It belongs to the SKP1 family. Component of the SCF (SKP1-CUL1-F-box protein) E3 ubiquitin ligase complexes.

It functions in the pathway protein modification; protein ubiquitination. Its function is as follows. Essential component of the SCF (SKP1-CUL1-F-box protein) E3 ubiquitin ligase complexes, which mediate the ubiquitination and subsequent proteasomal degradation of target proteins. Controls sulfur metabolite repression, probably by mediating the inactivation or degradation of the metR transcription factor. The polypeptide is E3 ubiquitin ligase complex SCF subunit sconC (sconC) (Talaromyces stipitatus (strain ATCC 10500 / CBS 375.48 / QM 6759 / NRRL 1006) (Penicillium stipitatum)).